The sequence spans 931 residues: GPI ethanolamine phosphate transferase 1 (931 aa).

Position 1 (Met1) is a topological domain, cytoplasmic. A helical membrane pass occupies residues 2 to 24 (LLFFTLGLLIHFVFFASIFDIYF). Over 25–442 (TSPLVHGMTP…SYYHTYDRFF (418 aa)) the chain is Lumenal. Residues Asn128, Asn192, and Asn350 are each glycosylated (N-linked (GlcNAc...) asparagine). Residues 443 to 463 (LGVNVVIGFVGWISYASLLII) traverse the membrane as a helical segment. The Cytoplasmic portion of the chain corresponds to 464–482 (KSHSNLIKGVSKEVKKPSH). A helical transmembrane segment spans residues 483–503 (LLPCSFVAIGILVAFFLLIQA). At 504-508 (CPWTY) the chain is on the lumenal side. Residues 509-529 (YVYGLLPLPIWYAVLREFQVI) traverse the membrane as a helical segment. Residues 530–543 (QDLVVSVLTYPLSH) lie on the Cytoplasmic side of the membrane. A helical transmembrane segment spans residues 544-564 (FVGYLLAFTLGIEVLVLSFFY). A topological domain (lumenal) is located at residue Arg565. Residues 566–586 (YMLTAGLTAFAAWPFLTRLWT) traverse the membrane as a helical segment. Over 587–591 (RAKMT) the chain is Cytoplasmic. Residues 592–612 (SLSWTFFSLLLAVFPLMPVVG) traverse the membrane as a helical segment. The Lumenal segment spans residues 613–618 (RKPDIS). Residues 619–639 (LVMGAGLLVLLLSLCVVTSLM) traverse the membrane as a helical segment. Residues 640–649 (KRKDSFIKEE) are Cytoplasmic-facing. The helical transmembrane segment at 650 to 670 (LLVHLLQVLSTVLSMYVVYST) threads the bilayer. Over 671–685 (QSSLLRKQGLPLMNQ) the chain is Lumenal. The helical transmembrane segment at 686 to 706 (IISWATLASSLVVPLLSSPVL) threads the bilayer. Residues 707-723 (FQRLFSILLSLMSTYLL) lie on the Cytoplasmic side of the membrane. The chain crosses the membrane as a helical span at residues 724–744 (LSTGYEALFPLVLSCLMFVWI). At 745–786 (NIEQETLQQSGVCCKQKLTSIQFSYNTDITQFRQLYLDDIRR) the chain is on the lumenal side. Residues 787–807 (AFFLVFFLVTAFFGTGNIASI) form a helical membrane-spanning segment. Residues 808–824 (NSFDLASVYCFLTVFSP) lie on the Cytoplasmic side of the membrane. Residues 825-845 (FMMGALMMWKILIPFVLVMCA) traverse the membrane as a helical segment. At 846-858 (FEAVQLTTQLSSK) the chain is on the lumenal side. The helical transmembrane segment at 859 to 879 (SLFLIVLVISDIMALHFFFLV) threads the bilayer. Over 880–894 (KDYGSWLDIGTSISH) the chain is Cytoplasmic. Residues 895-915 (YVIVMSMTIFLVFLNGLAQLL) form a helical membrane-spanning segment. The Lumenal segment spans residues 916-931 (TTKKLRLCGKPKSHFM).

Belongs to the PIGG/PIGN/PIGO family. PIGN subfamily.

The protein resides in the endoplasmic reticulum membrane. It functions in the pathway glycolipid biosynthesis; glycosylphosphatidylinositol-anchor biosynthesis. In terms of biological role, ethanolamine phosphate transferase that catalyzes an ethanolamine phosphate (EtNP) transfer from phosphatidylethanolamine (PE) to the 2-OH position of the first alpha-1,4-linked mannose of the alpha-D-Man-(1-&gt;6)-alpha-D-Man-(1-&gt;4)-alpha-D-GlcN-(1-&gt;6)-(1-radyl,2-acyl-sn-glycero-3-phospho)-2-acyl-inositol (also termed H3) intermediate to generate an alpha-D-Man-(1-&gt;6)-2-PEtn-alpha-D-Man-(1-&gt;4)-alpha-D-GlcN-(1-&gt;6)-(1-radyl,2-acyl-sn-glycero-3-phospho)-2-acyl-inositol and participates in the eighth step of the glycosylphosphatidylinositol-anchor biosynthesis. May act as suppressor of replication stress and chromosome missegregation. This chain is GPI ethanolamine phosphate transferase 1, found in Homo sapiens (Human).